The sequence spans 115 residues: uncharacterized protein (115 aa).

This is an uncharacterized protein from Bacillus subtilis (strain 168).